Here is a 245-residue protein sequence, read N- to C-terminus: Dehydrogenase/reductase SDR family member 6 (245 aa).

NAD(+) contacts are provided by residues glutamine 16–isoleucine 18, aspartate 37, and aspartate 58. Position 144 (arginine 144) interacts with substrate. The Proton acceptor role is filled by tyrosine 147. Residues lysine 151 and valine 180–serine 184 each bind NAD(+). Arginine 188 and arginine 205 together coordinate substrate.

This sequence belongs to the short-chain dehydrogenases/reductases (SDR) family. Homotetramer.

It is found in the cytoplasm. The catalysed reaction is cis-4-hydroxy-L-proline + NAD(+) = 4-oxo-L-proline + NADH + H(+). The enzyme catalyses (R)-3-hydroxybutanoate + NAD(+) = acetoacetate + NADH + H(+). The protein operates within amino-acid metabolism. It participates in siderophore biosynthesis. Its function is as follows. NAD(H)-dependent dehydrogenase/reductase with a preference for cyclic substrates. Catalyzes stereoselective conversion of 4-oxo-L-proline to cis-4-hydroxy-L-proline, likely a detoxification mechanism for ketoprolines. Mediates the formation of 2,5-dihydroxybenzoate (2,5-DHBA), a siderophore that chelates free cytoplasmic iron, thereby regulating iron transport and homeostasis while protecting cells against free radical-induced oxidative stress. The iron-siderophore complex is imported into mitochondria, providing an iron source for mitochondrial metabolic processes in particular heme synthesis. May act as a 3-hydroxybutyrate dehydrogenase. The protein is Dehydrogenase/reductase SDR family member 6 (bdh2) of Danio rerio (Zebrafish).